The primary structure comprises 458 residues: Bifunctional protein GlmU (458 aa).

The pyrophosphorylase stretch occupies residues 1–230 (MLQVDVVILA…DWEVSGVNDK (230 aa)). Residues 9–12 (LAAG), Lys-23, Gln-75, and 80–81 (GT) contribute to the UDP-N-acetyl-alpha-D-glucosamine site. Asp-104 provides a ligand contact to Mg(2+). Positions 139, 155, 170, and 228 each coordinate UDP-N-acetyl-alpha-D-glucosamine. Mg(2+) is bound at residue Asn-228. A linker region spans residues 231 to 251 (IQLSILERAHQQDTANRLMEQ). The N-acetyltransferase stretch occupies residues 252-458 (GVMFADPARF…NWKRPRKDRN (207 aa)). The UDP-N-acetyl-alpha-D-glucosamine site is built by Arg-334 and Lys-352. His-364 functions as the Proton acceptor in the catalytic mechanism. UDP-N-acetyl-alpha-D-glucosamine-binding residues include Tyr-367 and Asn-378. Acetyl-CoA contacts are provided by residues Ala-381, 387-388 (NY), Ser-406, Ala-424, and Arg-441.

It in the N-terminal section; belongs to the N-acetylglucosamine-1-phosphate uridyltransferase family. In the C-terminal section; belongs to the transferase hexapeptide repeat family. Homotrimer. Mg(2+) serves as cofactor.

The protein resides in the cytoplasm. The enzyme catalyses alpha-D-glucosamine 1-phosphate + acetyl-CoA = N-acetyl-alpha-D-glucosamine 1-phosphate + CoA + H(+). It carries out the reaction N-acetyl-alpha-D-glucosamine 1-phosphate + UTP + H(+) = UDP-N-acetyl-alpha-D-glucosamine + diphosphate. It functions in the pathway nucleotide-sugar biosynthesis; UDP-N-acetyl-alpha-D-glucosamine biosynthesis; N-acetyl-alpha-D-glucosamine 1-phosphate from alpha-D-glucosamine 6-phosphate (route II): step 2/2. The protein operates within nucleotide-sugar biosynthesis; UDP-N-acetyl-alpha-D-glucosamine biosynthesis; UDP-N-acetyl-alpha-D-glucosamine from N-acetyl-alpha-D-glucosamine 1-phosphate: step 1/1. Its pathway is bacterial outer membrane biogenesis; LPS lipid A biosynthesis. In terms of biological role, catalyzes the last two sequential reactions in the de novo biosynthetic pathway for UDP-N-acetylglucosamine (UDP-GlcNAc). The C-terminal domain catalyzes the transfer of acetyl group from acetyl coenzyme A to glucosamine-1-phosphate (GlcN-1-P) to produce N-acetylglucosamine-1-phosphate (GlcNAc-1-P), which is converted into UDP-GlcNAc by the transfer of uridine 5-monophosphate (from uridine 5-triphosphate), a reaction catalyzed by the N-terminal domain. In Nitrosomonas europaea (strain ATCC 19718 / CIP 103999 / KCTC 2705 / NBRC 14298), this protein is Bifunctional protein GlmU.